The primary structure comprises 645 residues: MKIYVDGREVIINDNERNLLEALKNVGIEIPNLCYLSEASIYGACRMCLVEINGQITTSCTLKPYEGMKVKTNTPEIYEMRRNILELILATHNRDCTTCDRNGSCKLQKYAEDFGIRKIRFEALKKEHVRDESAPVVRDTSKCILCGDCVRVCEEIQGVGVIEFAKRGFESVVTTAFDTPLIETECVLCGQCVAYCPTGALSIRNDIDKLIEALESDKIVIGMIAPAVRAAIQEEFGIDEDVAMAEKLVSFLKTIGFDKVFDVSFGADLVAYEEAHEFYERLKKGERLPQFTSCCPAWVKHAEHTYPQYLQNLSSVKSPQQALGTVIKKIYARKLGVPEEKIFLVSFMPCTAKKFEAEREEHEGIVDIVLTTRELAQLIKMSRIDINRVEPQPFDRPYGVSSQAGLGFGKAGGVFSCVLSVLNEEIGIEKVDVKSPEDGIRVAEVTLKDGTSFKGAVIYGLGKVKKFLEERKDVEIIEVMACNYGCVGGGGQPYPNDSRIREHRAKVLRDTMGIKSLLTPVENLFLMKLYEEDLKDEHTRHEILHTTYRPRRRYPEKDVEILPVPNGEKRTVKVCLGTSCYTKGSYEILKKLVDYVKENDMEGKIEVLGTFCVENCGASPNVIVDDKIIGGATFEKVLEELSKNG.

Residues methionine 1–glutamate 76 enclose the 2Fe-2S ferredoxin-type domain. Residues cysteine 34, cysteine 45, cysteine 48, and cysteine 60 each coordinate [2Fe-2S] cluster. One can recognise a 4Fe-4S His(Cys)3-ligated-type domain in the interval glutamate 76–glycine 115. 16 residues coordinate [4Fe-4S] cluster: histidine 92, cysteine 96, cysteine 99, cysteine 105, cysteine 143, cysteine 146, cysteine 149, cysteine 153, cysteine 186, cysteine 189, cysteine 192, cysteine 196, cysteine 295, cysteine 350, cysteine 482, and cysteine 486. 4Fe-4S ferredoxin-type domains follow at residues serine 133–phenylalanine 164 and aspartate 178–aspartate 206. Cysteine 486 serves as a coordination point for Fe(2+). Positions 575, 580, 612, and 616 each coordinate [2Fe-2S] cluster.

As to quaternary structure, heterotrimer composed of HydA (alpha subunit), HydB (beta subunit) and HydC (gamma subunit). Near neutral and acidic pH conditions favor oligomerization of the heterotrimeric holoenzyme. Requires [2Fe-2S] cluster as cofactor. It depends on [4Fe-4S] cluster as a cofactor. Fe(2+) serves as cofactor.

It is found in the cytoplasm. The enzyme catalyses 2 H2 + 2 oxidized [2Fe-2S]-[ferredoxin] + NAD(+) = 2 reduced [2Fe-2S]-[ferredoxin] + NADH + 3 H(+). Its function is as follows. Catalyzes the oxidation of the physiological electron carriers NADH and reduced ferredoxin, coupled to the production of H(2). Acts as a bifurcating [FeFe] hydrogenase, which uses the exergonic oxidation of reduced ferredoxin to drive the unfavorable oxidation of NADH to produce H(2). The alpha subunit contains the catalytic H-cluster. The chain is Bifurcating [FeFe] hydrogenase alpha subunit from Thermotoga maritima (strain ATCC 43589 / DSM 3109 / JCM 10099 / NBRC 100826 / MSB8).